Reading from the N-terminus, the 528-residue chain is UDP-glucuronosyltransferase 1A9 (528 aa).

A signal peptide spans 1–23 (MAPVAFPTSFFLCLLLASGLAQA). The N-linked (GlcNAc...) asparagine glycan is linked to asparagine 69. Lysine 97 is subject to N6-succinyllysine. Asparagine 290 and asparagine 428 each carry an N-linked (GlcNAc...) asparagine glycan. A helical transmembrane segment spans residues 486-506 (VIGFLLAIVLTVVFIVFKCCA).

The protein belongs to the UDP-glycosyltransferase family. Homodimer. Homooligomer. Interacts with UGT1A1, UGT1A3, UGT1A4, UGT1A6, UGT1A7, UGT1A8 and UGT1A10 to form heterodimers. Highly expressed in liver and at lower levels in stomach and kidney.

The protein resides in the endoplasmic reticulum membrane. The enzyme catalyses glucuronate acceptor + UDP-alpha-D-glucuronate = acceptor beta-D-glucuronoside + UDP + H(+). It catalyses the reaction 2-hydroxy-17beta-estradiol + UDP-alpha-D-glucuronate = 2-hydroxy-17beta-estradiol 3-O-(beta-D-glucuronate) + UDP + H(+). It carries out the reaction 4-hydroxy-17beta-estradiol + UDP-alpha-D-glucuronate = 17beta-estradiol 4-O-(beta-D-glucuronate) + UDP + H(+). The catalysed reaction is 2-hydroxyestrone + UDP-alpha-D-glucuronate = 2-hydroxyestrone 3-O-(beta-D-glucuronate) + UDP + H(+). The enzyme catalyses 4-hydroxyestrone + UDP-alpha-D-glucuronate = estrone 4-O-(beta-D-glucuronate) + UDP + H(+). It catalyses the reaction prunetin + UDP-alpha-D-glucuronate = prunetin-5-O-beta-D-glucuronide + UDP. It carries out the reaction 8-iso-prostaglandin F2alpha + UDP-alpha-D-glucuronate = 8-iso-prostaglandin F2alpha-glucuronide + UDP + H(+). The catalysed reaction is 5-epi-5-F2t-IsoP + UDP-alpha-D-glucuronate = 5-epi-5-F2t-IsoP-glucuronide + UDP + H(+). The enzyme catalyses (5Z,8Z,11Z,14Z)-eicosatetraenoate + UDP-alpha-D-glucuronate = O-[(5Z),(8Z),(11Z),(14Z)-eicosatetraenoyl]-beta-D-glucuronate + UDP. It catalyses the reaction 15-hydroxy-(5Z,8Z,11Z,13E)-eicosatetraenoate + UDP-alpha-D-glucuronate = 15-O-(beta-D-glucuronosyl)-(5Z,8Z,11Z,14Z)-eicosatetraenoate + UDP + H(+). It carries out the reaction prostaglandin B1 + UDP-alpha-D-glucuronate = 15-O-(beta-D-glucuronosyl)-prostaglandin B1 + UDP + H(+). The catalysed reaction is (E)-ferulate + UDP-alpha-D-glucuronate = (E)-4-O-(beta-D-glucuronosyl)-ferulate + UDP + H(+). The enzyme catalyses (E)-ferulate + UDP-alpha-D-glucuronate = (E)-ferulic acid beta-D-glucuronate ester + UDP. It catalyses the reaction candesartan + UDP-alpha-D-glucuronate = candesartan O-beta-D-glucuronoside + UDP. It carries out the reaction SN-38 + UDP-alpha-D-glucuronate = SN-38 O-beta-D-glucuronide + UDP + H(+). The catalysed reaction is mycophenolate + UDP-alpha-D-glucuronate = mycophenolate 7-O-beta-D-glucuronide + UDP + H(+). In terms of biological role, UDP-glucuronosyltransferase (UGT) that catalyzes phase II biotransformation reactions in which lipophilic substrates are conjugated with glucuronic acid to increase the metabolite's water solubility, thereby facilitating excretion into either the urine or bile. Essential for the elimination and detoxification of drugs, xenobiotics and endogenous compounds. Catalyzes the glucuronidation of endogenous estrogen hormones such as estradiol and estrone. Involved in the glucuronidation of arachidonic acid (AA) and AA-derived eicosanoids including 15-HETE, PGB1 and F2-isoprostanes (8-iso-PGF2alpha and 5-epi-5-F2t-IsoP). Glucuronates the phytochemical ferulic acid efficently at both the phenolic or the carboxylic acid group. Also catalyzes the glucuronidation of the isoflavones genistein, daidzein, glycitein, formononetin, biochanin A and prunetin, which are phytoestrogens with anticancer and cardiovascular properties. Involved in the glucuronidation of the AGTR1 angiotensin receptor antagonist caderastan, a drug which can inhibit the effect of angiotensin II. Involved in the biotransformation of 7-ethyl-10-hydroxycamptothecin (SN-38), the pharmacologically active metabolite of the anticancer drug irinotecan. Also metabolizes mycophenolate, an immunosuppressive agent. The sequence is that of UDP-glucuronosyltransferase 1A9 from Mus musculus (Mouse).